Here is a 789-residue protein sequence, read N- to C-terminus: Protein FLOWERING LOCUS D (789 aa).

The disordered stretch occupies residues 1 to 23; that stretch reads MVSFSAPKKRRRGRSQRSMSSLN. One can recognise an SWIRM domain in the interval 76–177; the sequence is NKEATTEALL…FGIAQAIKDK (102 aa). FAD-binding positions include Ser195, Glu214, Arg216, Arg222, and 240 to 243; that span reads GGSV. Lys287 is covalently cross-linked (Glycyl lysine isopeptide (Lys-Gly) (interchain with G-Cter in SUMO)). FAD-binding positions include Glu595, 604 to 605, and 607 to 612; these read TM and GAFVTG. Residues Lys693 and Lys770 each participate in a glycyl lysine isopeptide (Lys-Gly) (interchain with G-Cter in SUMO) cross-link.

Belongs to the flavin monoamine oxidase family. Interacts with HDA6. FAD serves as cofactor. In terms of processing, sumoylated at Lys-287, Lys-693 and Lys-770 by SIZ1. Sumoylation alters its activity and the histone H4 acetylation status of FLC locus, promoting FLC expression.

Probable histone demethylase that promotes flowering independently of the photoperiod and vernalization pathways by repressing FLOWERING LOCUS C (FLC), a floral repressor that blocks the transition from vegetative to reproductive development. Probably mediates histone H3 'Lys-4' demethylation at FLC locus. Seems to act in partial redundancy with LDL1 and LDL2 to repress FLC expression. Required for histone H4 deacetylation of FLC locus. May be a component of the histone deacetylase complex. Forms a histone deacetylase complex with HDA5, HDA6 and MSI4/FVE that represses FLC gene expression to control flowering time. Required for systemic acquired resistance (SAR) toward pathogenic bacteria (e.g. Pseudomonas syringae pv tomato DC3000 (avrPto)). Together with FLD and MSI4/FVE, contributes to dehydroabietinal-dependent (DA, a diterpenoid tricyclic diterpene) activation of flowering ans SAR. This is Protein FLOWERING LOCUS D from Arabidopsis thaliana (Mouse-ear cress).